An 82-amino-acid polypeptide reads, in one-letter code: Cytochrome b559 subunit alpha (82 aa).

The chain crosses the membrane as a helical span at residues 22-36; the sequence is IIHAVTLPAIFIAGF. Histidine 24 serves as a coordination point for heme.

The protein belongs to the PsbE/PsbF family. Heterodimer of an alpha subunit and a beta subunit. PSII is composed of 1 copy each of membrane proteins PsbA, PsbB, PsbC, PsbD, PsbE, PsbF, PsbH, PsbI, PsbJ, PsbK, PsbL, PsbM, PsbT, PsbX, PsbY, Psb30/Ycf12, peripheral proteins PsbO, CyanoQ (PsbQ), PsbU, PsbV and a large number of cofactors. It forms dimeric complexes. Requires heme b as cofactor.

The protein resides in the cellular thylakoid membrane. Its function is as follows. This b-type cytochrome is tightly associated with the reaction center of photosystem II (PSII). PSII is a light-driven water:plastoquinone oxidoreductase that uses light energy to abstract electrons from H(2)O, generating O(2) and a proton gradient subsequently used for ATP formation. It consists of a core antenna complex that captures photons, and an electron transfer chain that converts photonic excitation into a charge separation. This chain is Cytochrome b559 subunit alpha, found in Prochlorococcus marinus (strain MIT 9211).